The primary structure comprises 611 residues: Phosphomethylpyrimidine synthase (611 aa).

Substrate is bound by residues asparagine 212, methionine 241, tyrosine 270, histidine 306, 326–328 (SRG), 367–370 (DGLR), and glutamate 406. Histidine 410 contributes to the Zn(2+) binding site. Position 433 (tyrosine 433) interacts with substrate. Zn(2+) is bound at residue histidine 474. Residues cysteine 554, cysteine 557, and cysteine 562 each coordinate [4Fe-4S] cluster.

The protein belongs to the ThiC family. As to quaternary structure, homodimer. [4Fe-4S] cluster is required as a cofactor.

It catalyses the reaction 5-amino-1-(5-phospho-beta-D-ribosyl)imidazole + S-adenosyl-L-methionine = 4-amino-2-methyl-5-(phosphooxymethyl)pyrimidine + CO + 5'-deoxyadenosine + formate + L-methionine + 3 H(+). Its pathway is cofactor biosynthesis; thiamine diphosphate biosynthesis. In terms of biological role, catalyzes the synthesis of the hydroxymethylpyrimidine phosphate (HMP-P) moiety of thiamine from aminoimidazole ribotide (AIR) in a radical S-adenosyl-L-methionine (SAM)-dependent reaction. The chain is Phosphomethylpyrimidine synthase from Bartonella bacilliformis (strain ATCC 35685 / KC583 / Herrer 020/F12,63).